A 324-amino-acid polypeptide reads, in one-letter code: Pseudouridylate synthase RPUSD4, mitochondrial (324 aa).

Residues 1 to 11 constitute a mitochondrion transit peptide; it reads MAAAGGGATRG. Aspartate 105 is an active-site residue.

The protein belongs to the pseudouridine synthase RluA family.

The protein localises to the mitochondrion matrix. It is found in the nucleus. It localises to the cytoplasm. The catalysed reaction is uridine in 5S rRNA = pseudouridine in 5S rRNA. The enzyme catalyses a uridine in tRNA = a pseudouridine in tRNA. It catalyses the reaction a uridine in mRNA = a pseudouridine in mRNA. In terms of biological role, catalyzes uridine to pseudouridine isomerization (pseudouridylation) of different mitochondrial RNA substrates. Acts on position 1397 in 16S mitochondrial ribosomal RNA (16S mt-rRNA). This modification is required for the assembly of 16S mt-rRNA into a functional mitochondrial ribosome. Acts on position 39 in mitochondrial tRNA(Phe). Also catalyzes pseudouridylation of mRNAs in nucleus: acts as a regulator of pre-mRNA splicing by mediating pseudouridylation of pre-mRNAs at locations associated with alternatively spliced regions. Pseudouridylation of pre-mRNAs near splice sites directly regulates mRNA splicing and mRNA 3'-end processing. This Xenopus tropicalis (Western clawed frog) protein is Pseudouridylate synthase RPUSD4, mitochondrial.